Reading from the N-terminus, the 114-residue chain is Ferredoxin (114 aa).

[3Fe-4S] cluster is bound by residues Cys9 and Cys17. [4Fe-4S] cluster is bound by residues Cys21, Cys40, Cys43, and Cys46. One can recognise a 4Fe-4S ferredoxin-type domain in the interval 31 to 60 (RMLYINPDECVDCGACKPACRVEAIYWEGD). Cys50 lines the [3Fe-4S] cluster pocket.

Requires [4Fe-4S] cluster as cofactor. [3Fe-4S] cluster is required as a cofactor.

In terms of biological role, ferredoxins are iron-sulfur proteins that transfer electrons in a wide variety of metabolic reactions. The polypeptide is Ferredoxin (fdxA) (Mycobacterium tuberculosis (strain ATCC 25618 / H37Rv)).